The following is a 202-amino-acid chain: Na(+)-translocating NADH-quinone reductase subunit E (202 aa).

The next 6 helical transmembrane spans lie at 11–31 (AVFI…FLAV), 39–59 (FGLG…NNLI), 81–101 (FLKF…LEMA), 114–134 (GIFL…AFMV), 144–164 (VVFG…LAAV), and 180–200 (LGIT…FSGV).

It belongs to the NqrDE/RnfAE family. As to quaternary structure, composed of six subunits; NqrA, NqrB, NqrC, NqrD, NqrE and NqrF.

Its subcellular location is the cell inner membrane. The enzyme catalyses a ubiquinone + n Na(+)(in) + NADH + H(+) = a ubiquinol + n Na(+)(out) + NAD(+). Its function is as follows. NQR complex catalyzes the reduction of ubiquinone-1 to ubiquinol by two successive reactions, coupled with the transport of Na(+) ions from the cytoplasm to the periplasm. NqrA to NqrE are probably involved in the second step, the conversion of ubisemiquinone to ubiquinol. This Idiomarina loihiensis (strain ATCC BAA-735 / DSM 15497 / L2-TR) protein is Na(+)-translocating NADH-quinone reductase subunit E.